Reading from the N-terminus, the 357-residue chain is Ubiquitin carboxyl-terminal hydrolase 2 (357 aa).

One can recognise a USP domain in the interval 19 to 351 (TGLRNLGNTC…DAYLLFYELA (333 aa)). C28 serves as the catalytic Nucleophile. The Zn(2+) site is built by C177, C180, C228, and C231. The active-site Proton acceptor is H309.

Belongs to the peptidase C19 family. USP2 subfamily. In terms of assembly, homooligomer.

The protein resides in the cytoplasm. The protein localises to the perinuclear region. The catalysed reaction is Thiol-dependent hydrolysis of ester, thioester, amide, peptide and isopeptide bonds formed by the C-terminal Gly of ubiquitin (a 76-residue protein attached to proteins as an intracellular targeting signal).. Functionally, hydrolase that deubiquitinates polyubiquitinated target proteins such as MDM2, MDM4 and CCND1. Possesses both ubiquitin-specific peptidase and isopeptidase activities. May play a role in the regulation of the circadian clock. The sequence is that of Ubiquitin carboxyl-terminal hydrolase 2 (USP2) from Gallus gallus (Chicken).